A 409-amino-acid polypeptide reads, in one-letter code: POU domain, class 4, transcription factor 2 (409 aa).

Positions 26-93 are disordered; the sequence is YSALHSTSPG…SEAMRRACLP (68 aa). Positions 31–52 are enriched in low complexity; it reads STSPGSSAPIAPSASSPSSSSN. Over residues 53-69 the composition is skewed to gly residues; that stretch reads AGGGGGGGGGGGGGGGR. The interval 91–237 is required for transcriptional activation; sequence CLPTPPSNIF…MHQAALSMAH (147 aa). The POU-IV box signature appears at 110–119; sequence RAEALAAVDI. Residues 153-166 show a composition bias toward low complexity; that stretch reads AASSSSVPISHPSA. The segment at 153-188 is disordered; the sequence is AASSSSVPISHPSALAGTHHHHHHHHHHHHQPHQAL. Residues 170 to 184 are compositionally biased toward basic residues; the sequence is THHHHHHHHHHHHQP. A Nuclear speckle targeting signal motif is present at residues 171 to 185; sequence HHHHHHHHHHHHQPH. Residues 238-409 form a required for DNA-binding and transcriptional repression region; the sequence is AHGLPSHMGC…QKRMKYSAGI (172 aa). Residues 250–327 form the POU-specific domain; the sequence is DVDADPRDLE…ILQAWLEEAE (78 aa). Residues 345–404 constitute a DNA-binding region (homeobox); it reads KKRKRTSIAAPEKRSLEAYFAIQPRPSSEKIAAIAEKLDLKKNVVRVWFCNQRQKQKRMK.

The protein belongs to the POU transcription factor family. Class-4 subfamily. Interacts with POU4F1; this interaction inhibits both POU4F1 DNA-binding and transcriptional activities. Interacts (C-terminus) with ESR1 (via DNA-binding domain); this interaction increases the estrogen receptor ESR1 transcriptional activity in a DNA- and ligand 17-beta-estradiol-independent manner. Interacts (via C-terminus) with TP53 (via N-terminus). Interacts with DLX1 (via homeobox DNA-binding domain); this interaction suppresses DLX1-mediated transcriptional activity in postnatal retina enhancing retinal ganglion cell (RGC) differentiation. Interacts with DLX2 (via homeobox DNA-binding domain); this interaction enhances RGC differentiation. Interacts (via C-terminus) with ISL1 (via C-terminus). Interacts with ISL2. Interacts with LHX2. Expressed in the brain. Expressed in the ganglion cell layer of the retina.

It is found in the nucleus. The protein resides in the nucleus speckle. The protein localises to the cytoplasm. Tissue-specific DNA-binding transcription factor involved in the development and differentiation of target cells. Functions either as activator or repressor modulating the rate of target gene transcription through RNA polymerase II enzyme in a promoter-dependent manner. Binds to the consensus octamer motif 5'-AT[A/T]A[T/A]T[A/T]A-3' of promoter of target genes. Plays a fundamental role in the gene regulatory network essential for retinal ganglion cell (RGC) differentiation. Binds to an octamer site to form a ternary complex with ISL1; cooperates positively with ISL1 and ISL2 to potentiate transcriptional activation of RGC target genes being involved in RGC fate commitment in the developing retina and RGC axon formation and pathfinding. Inhibits DLX1 and DLX2 transcriptional activities preventing DLX1- and DLX2-mediated ability to promote amacrine cell fate specification. In cooperation with TP53 potentiates transcriptional activation of BAX promoter activity increasing neuronal cell apoptosis. Negatively regulates BAX promoter activity in the absence of TP53. Acts as a transcriptional coactivator via its interaction with the transcription factor ESR1 by enhancing its effect on estrogen response element (ERE)-containing promoter. Antagonizes the transcriptional stimulatory activity of POU4F1 by preventing its binding to an octamer motif. Involved in TNFSF11-mediated terminal osteoclast differentiation. The polypeptide is POU domain, class 4, transcription factor 2 (Homo sapiens (Human)).